Reading from the N-terminus, the 372-residue chain is NADH-quinone oxidoreductase subunit H (372 aa).

The next 8 membrane-spanning stretches (helical) occupy residues 34–54 (LPLG…LYAL), 106–126 (FLFV…FAVL), 139–159 (VGLF…LAAG), 178–198 (IVSY…MAGT), 217–237 (FFLF…IASL), 269–289 (VIFL…AIVF), 313–333 (VWGA…QMWL), and 352–372 (VLTP…IYVP).

It belongs to the complex I subunit 1 family. In terms of assembly, NDH-1 is composed of 14 different subunits. Subunits NuoA, H, J, K, L, M, N constitute the membrane sector of the complex.

Its subcellular location is the cell inner membrane. The catalysed reaction is a quinone + NADH + 5 H(+)(in) = a quinol + NAD(+) + 4 H(+)(out). In terms of biological role, NDH-1 shuttles electrons from NADH, via FMN and iron-sulfur (Fe-S) centers, to quinones in the respiratory chain. The immediate electron acceptor for the enzyme in this species is believed to be ubiquinone. Couples the redox reaction to proton translocation (for every two electrons transferred, four hydrogen ions are translocated across the cytoplasmic membrane), and thus conserves the redox energy in a proton gradient. This subunit may bind ubiquinone. This Chlorobium luteolum (strain DSM 273 / BCRC 81028 / 2530) (Pelodictyon luteolum) protein is NADH-quinone oxidoreductase subunit H.